We begin with the raw amino-acid sequence, 495 residues long: NADP/NAD-dependent aldehyde dehydrogenase PuuC (495 aa).

244–249 (GSTRTG) is an NAD(+) binding site. Catalysis depends on residues Glu267 and Cys302.

The protein belongs to the aldehyde dehydrogenase family.

The enzyme catalyses an aldehyde + NADP(+) + H2O = a carboxylate + NADPH + 2 H(+). It carries out the reaction an aldehyde + NAD(+) + H2O = a carboxylate + NADH + 2 H(+). It catalyses the reaction 4-(gamma-L-glutamylamino)butanal + NADP(+) + H2O = 4-(gamma-L-glutamylamino)butanoate + NADPH + 2 H(+). The catalysed reaction is 4-(gamma-L-glutamylamino)butanal + NAD(+) + H2O = 4-(gamma-L-glutamylamino)butanoate + NADH + 2 H(+). The protein operates within amine and polyamine degradation; putrescine degradation; 4-aminobutanoate from putrescine: step 3/4. Lithium ions exhibits the highest inhibition (97%). To a lesser extent (5-20%), potassium, sodium, and ammonium ions also inhibit PuuC activity. Transition metals, such as copper and zinc ions inhibit PuuC activity by more than 90%. The presence of heavy metals (mercury, silver) or sodium hydrogensulfite in the reaction mixture completely inactivate PuuC; in contrast, disulfide reductants such as DTT and 2-mercaptoethanol significantly increase its activity by 75% and 27%, respectively. Functionally, catalyzes the oxidation of 3-hydroxypropionaldehyde (3-HPA) to 3-hydroxypropionic acid (3-HP). It acts preferentially with NAD but can also use NADP. 3-HPA appears to be the most suitable substrate for PuuC followed by isovaleraldehyde, propionaldehyde, butyraldehyde, and valeraldehyde. It might play a role in propionate and/or acetic acid metabolisms. Also involved in the breakdown of putrescine through the oxidation of gamma-Glu-gamma-aminobutyraldehyde to gamma-Glu-gamma-aminobutyrate (gamma-Glu-GABA). The sequence is that of NADP/NAD-dependent aldehyde dehydrogenase PuuC from Escherichia coli (strain K12).